Consider the following 262-residue polypeptide: Probable lipoprotein EnvF (262 aa).

The N-terminal stretch at 1–25 is a signal peptide; the sequence is MNKIHVTYKNLLLPITFIAATLISA. Cysteine 26 carries N-palmitoyl cysteine lipidation. Cysteine 26 carries S-diacylglycerol cysteine lipidation. The disordered stretch occupies residues 227 to 262; that stretch reads EAEKAQQLVEQSRKDIESQRKKAAGKMNEIQQTFKK. The span at 237 to 246 shows a compositional bias: basic and acidic residues; it reads QSRKDIESQR.

It localises to the cell membrane. This is Probable lipoprotein EnvF (envF) from Salmonella typhimurium (strain LT2 / SGSC1412 / ATCC 700720).